The sequence spans 214 residues: Octanoyltransferase (214 aa).

The region spanning 29–214 is the BPL/LPL catalytic domain; sequence SETLDEIWVL…QHLQKQLIPS (186 aa). Residues 69–76, 146–148, and 159–161 each bind substrate; these read RGGEITYH, ALG, and GLA. Cys-177 acts as the Acyl-thioester intermediate in catalysis.

The protein belongs to the LipB family.

The protein resides in the cytoplasm. The enzyme catalyses octanoyl-[ACP] + L-lysyl-[protein] = N(6)-octanoyl-L-lysyl-[protein] + holo-[ACP] + H(+). It functions in the pathway protein modification; protein lipoylation via endogenous pathway; protein N(6)-(lipoyl)lysine from octanoyl-[acyl-carrier-protein]: step 1/2. In terms of biological role, catalyzes the transfer of endogenously produced octanoic acid from octanoyl-acyl-carrier-protein onto the lipoyl domains of lipoate-dependent enzymes. Lipoyl-ACP can also act as a substrate although octanoyl-ACP is likely to be the physiological substrate. The chain is Octanoyltransferase from Polynucleobacter necessarius subsp. necessarius (strain STIR1).